The chain runs to 206 residues: Guanylate kinase (206 aa).

A Guanylate kinase-like domain is found at 7–185 (GIVLVLCAPS…AYDELRAAYL (179 aa)). 14–21 (APSGTGKT) lines the ATP pocket.

Belongs to the guanylate kinase family.

The protein resides in the cytoplasm. The catalysed reaction is GMP + ATP = GDP + ADP. Functionally, essential for recycling GMP and indirectly, cGMP. This chain is Guanylate kinase, found in Oleidesulfovibrio alaskensis (strain ATCC BAA-1058 / DSM 17464 / G20) (Desulfovibrio alaskensis).